The sequence spans 107 residues: UPF0102 protein CTN_0433 (107 aa).

The protein belongs to the UPF0102 family.

The polypeptide is UPF0102 protein CTN_0433 (Thermotoga neapolitana (strain ATCC 49049 / DSM 4359 / NBRC 107923 / NS-E)).